Here is an 850-residue protein sequence, read N- to C-terminus: Coiled-coil and C2 domain-containing protein 1B (850 aa).

The segment covering 1–10 (MPGPRPRKGP) has biased composition (basic residues). 3 disordered regions span residues 1–21 (MPGP…ETAK), 54–73 (LTGE…RAPL), and 114–145 (GVDE…EQPV). Residues 114–129 (GVDEETGLVDDSEETS) are compositionally biased toward acidic residues. The stretch at 167 to 213 (LQALLEERIQNYREAAASAKEAGEAAKARRCERGLKTLESQLATVRK) forms a coiled coil. Disordered stretches follow at residues 215–277 (GKIC…SDPD) and 436–525 (FAEL…SPSV). Over residues 234–244 (AHQERPSKDSE) the composition is skewed to basic and acidic residues. The segment covering 440 to 450 (PVPPGFPPIPG) has biased composition (pro residues). 2 stretches are compositionally biased toward low complexity: residues 489–502 (PAQA…AQPL) and 511–524 (EPKA…LSPS). The residue at position 585 (Ser-585) is a Phosphoserine. Position 588 is a phosphothreonine (Thr-588). The region spanning 668-807 (DPPSHHFELK…EKECEIREIM (140 aa)) is the C2 domain.

In terms of assembly, interacts with CHMP4B. Expressed in epididymal sperm but not in testicular sperm (at protein level).

The protein localises to the nucleus. Its function is as follows. Transcription factor that binds specifically to the DRE (dual repressor element) and represses HTR1A gene transcription in neuronal cells. The chain is Coiled-coil and C2 domain-containing protein 1B (Cc2d1b) from Rattus norvegicus (Rat).